Consider the following 429-residue polypeptide: 3-phosphoshikimate 1-carboxyvinyltransferase (429 aa).

Lys23, Ser24, and Arg28 together coordinate 3-phosphoshikimate. Phosphoenolpyruvate is bound at residue Lys23. Residues Gly95 and Arg123 each coordinate phosphoenolpyruvate. 3-phosphoshikimate is bound by residues Ser168, Gln170, Asp316, and Lys343. A phosphoenolpyruvate-binding site is contributed by Gln170. Catalysis depends on Asp316, which acts as the Proton acceptor. Phosphoenolpyruvate is bound by residues Arg347 and Arg389.

This sequence belongs to the EPSP synthase family. Monomer.

It localises to the cytoplasm. It carries out the reaction 3-phosphoshikimate + phosphoenolpyruvate = 5-O-(1-carboxyvinyl)-3-phosphoshikimate + phosphate. The protein operates within metabolic intermediate biosynthesis; chorismate biosynthesis; chorismate from D-erythrose 4-phosphate and phosphoenolpyruvate: step 6/7. Functionally, catalyzes the transfer of the enolpyruvyl moiety of phosphoenolpyruvate (PEP) to the 5-hydroxyl of shikimate-3-phosphate (S3P) to produce enolpyruvyl shikimate-3-phosphate and inorganic phosphate. The protein is 3-phosphoshikimate 1-carboxyvinyltransferase of Bacillus cereus (strain ATCC 10987 / NRS 248).